The primary structure comprises 521 residues: Ribonuclease Y 1 (521 aa).

A helical membrane pass occupies residues 1 to 21 (MEIVISAIIGLLIGGTVVFVI). The disordered stretch occupies residues 51-87 (IKKESENKAKDFESRARKNVEQDIHKQKSTLKNKESQ). The 61-residue stretch at 211-271 (TVSVLALPND…VRRELARRTI (61 aa)) folds into the KH domain. In terms of domain architecture, HD spans 337-430 (ALNQSLEVAT…VHAAYTLSSS (94 aa)).

It belongs to the RNase Y family.

Its subcellular location is the cell membrane. Endoribonuclease that initiates mRNA decay. The chain is Ribonuclease Y 1 from Bdellovibrio bacteriovorus (strain ATCC 15356 / DSM 50701 / NCIMB 9529 / HD100).